A 232-amino-acid chain; its full sequence is MKDYFKEGLEKIKVSYDENKMEKSLKYLEILLDYNSHTNLTAIREEKAIIEKHFLDSLLLQNLLKDEDKTLIDIGTGAGFPGMILAIFNEDKKFTLLDSVRKKTDFLELVKNELALNNVEVINGRAEEIIKDRREKYDVGLCRGVSNLSVILEYEIPFLKVNGRFLPQKMIGTDEIKNSSNALKILNSKILKEYEFKLPFSNEDRLVIEILKTKKTDEKYPRKIGIPLKKPL.

Residues glycine 75, phenylalanine 80, alanine 126–glutamate 127, and arginine 143 contribute to the S-adenosyl-L-methionine site.

The protein belongs to the methyltransferase superfamily. RNA methyltransferase RsmG family.

The protein localises to the cytoplasm. Its function is as follows. Specifically methylates the N7 position of a guanine in 16S rRNA. The polypeptide is Ribosomal RNA small subunit methyltransferase G (Fusobacterium nucleatum subsp. nucleatum (strain ATCC 25586 / DSM 15643 / BCRC 10681 / CIP 101130 / JCM 8532 / KCTC 2640 / LMG 13131 / VPI 4355)).